A 418-amino-acid chain; its full sequence is F420-non-reducing hydrogenase vhu subunit A (418 aa).

Ni(2+) contacts are provided by C61 and C64.

Belongs to the [NiFe]/[NiFeSe] hydrogenase large subunit family. The F420-non-reducing hydrogenase vhu is composed of four subunits; VhuA, VhuD, VhuG and VhuU. Ni(2+) serves as cofactor.

The sequence is that of F420-non-reducing hydrogenase vhu subunit A (vhuA) from Methanocaldococcus jannaschii (strain ATCC 43067 / DSM 2661 / JAL-1 / JCM 10045 / NBRC 100440) (Methanococcus jannaschii).